The following is a 395-amino-acid chain: ATP phosphoribosyltransferase regulatory subunit (395 aa).

Belongs to the class-II aminoacyl-tRNA synthetase family. HisZ subfamily. Heteromultimer composed of HisG and HisZ subunits.

The protein localises to the cytoplasm. The protein operates within amino-acid biosynthesis; L-histidine biosynthesis; L-histidine from 5-phospho-alpha-D-ribose 1-diphosphate: step 1/9. In terms of biological role, required for the first step of histidine biosynthesis. May allow the feedback regulation of ATP phosphoribosyltransferase activity by histidine. The chain is ATP phosphoribosyltransferase regulatory subunit from Thioalkalivibrio sulfidiphilus (strain HL-EbGR7).